A 91-amino-acid polypeptide reads, in one-letter code: uncharacterized protein (91 aa).

It is found in the plastid. Its subcellular location is the chloroplast. This is an uncharacterized protein from Phalaenopsis aphrodite subsp. formosana (Moth orchid).